Here is a 101-residue protein sequence, read N- to C-terminus: Interleukin-8 (101 aa).

A signal peptide spans 1–22 (MTSKLAVALLAAFLLSAALCEA). Residue Arg27 is modified to Citrulline. 2 disulfide bridges follow: Cys34-Cys61 and Cys36-Cys77.

This sequence belongs to the intercrine alpha (chemokine CxC) family. As to quaternary structure, homodimer. Interacts with TNFAIP6 (via Link domain); this interaction interferes with chemokine binding to glycosaminoglycans. In terms of processing, citrullination at Arg-27 prevents proteolysis, and dampens tissue inflammation, it also enhances leukocytosis, possibly through impaired chemokine clearance from the blood circulation.

It localises to the secreted. In terms of biological role, chemotactic factor that mediates inflammatory response by attracting neutrophils, basophils, and T-cells to clear pathogens and protect the host from infection. Also plays an important role in neutrophil activation. Released in response to an inflammatory stimulus, exerts its effect by binding to the G-protein-coupled receptors CXCR1 and CXCR2, primarily found in neutrophils, monocytes and endothelial cells. G-protein heterotrimer (alpha, beta, gamma subunits) constitutively binds to CXCR1/CXCR2 receptor and activation by IL8 leads to beta and gamma subunits release from Galpha (GNAI2 in neutrophils) and activation of several downstream signaling pathways including PI3K and MAPK pathways. In Ovis aries (Sheep), this protein is Interleukin-8 (CXCL8).